The following is a 275-amino-acid chain: MVITIKDIINIPYDKAEKTIIEFIKNKIEEANLKGAVIGLSGGVDSSVTLLLTMKAIGIERVTALIMPDTRVTPKRDIEDALWLVKKYGIKYYVIRIDDIVDSYSAMPFFNINYNIPTGNLRARIRMNILYYYANLHNYIVVGTGDRSEILIGYFTKYGDGGVDILPIGSLFKTQVRKMGDYLGLPEKITSKPSSPALWLGHKAEEELGIKYETIDLVLYALFDKHIEPEKVPEHTGVDPSIVAKILEMHRKTRHKRLSPPIPSLPWVKEPIREI.

39–46 (GLSGGVDS) lines the ATP pocket. Aspartate 45 is a Mg(2+) binding site. Residue arginine 124 coordinates deamido-NAD(+). Residue threonine 144 participates in ATP binding. Glutamate 149 contacts Mg(2+). Residues lysine 157 and aspartate 164 each contribute to the deamido-NAD(+) site. Residues lysine 173 and serine 195 each coordinate ATP. 255 to 256 (HK) lines the deamido-NAD(+) pocket.

The protein belongs to the NAD synthetase family. Homodimer.

It carries out the reaction deamido-NAD(+) + NH4(+) + ATP = AMP + diphosphate + NAD(+) + H(+). Its pathway is cofactor biosynthesis; NAD(+) biosynthesis; NAD(+) from deamido-NAD(+) (ammonia route): step 1/1. Its function is as follows. Catalyzes the ATP-dependent amidation of deamido-NAD to form NAD. Uses ammonia as a nitrogen source. The chain is NH(3)-dependent NAD(+) synthetase from Staphylothermus marinus (strain ATCC 43588 / DSM 3639 / JCM 9404 / F1).